Reading from the N-terminus, the 426-residue chain is Tol-Pal system protein TolB (426 aa).

Positions 1–24 (MKLKSRFTSIIGVITLFFSQTVTA) are cleaved as a signal peptide.

It belongs to the TolB family. As to quaternary structure, the Tol-Pal system is composed of five core proteins: the inner membrane proteins TolA, TolQ and TolR, the periplasmic protein TolB and the outer membrane protein Pal. They form a network linking the inner and outer membranes and the peptidoglycan layer.

It localises to the periplasm. In terms of biological role, part of the Tol-Pal system, which plays a role in outer membrane invagination during cell division and is important for maintaining outer membrane integrity. In Actinobacillus pleuropneumoniae serotype 5b (strain L20), this protein is Tol-Pal system protein TolB.